Reading from the N-terminus, the 754-residue chain is 5-methyltetrahydropteroyltriglutamate--homocysteine methyltransferase (754 aa).

5-methyltetrahydropteroyltri-L-glutamate-binding positions include 17–20 (RELK) and K117. L-homocysteine is bound by residues 431 to 433 (IGS) and E484. L-methionine contacts are provided by residues 431 to 433 (IGS) and E484. Residues 515-516 (RC) and W561 contribute to the 5-methyltetrahydropteroyltri-L-glutamate site. Residue D599 participates in L-homocysteine binding. An L-methionine-binding site is contributed by D599. E605 contributes to the 5-methyltetrahydropteroyltri-L-glutamate binding site. Zn(2+) is bound by residues H641, C643, and E665. Residue H694 is the Proton donor of the active site. C726 is a Zn(2+) binding site.

Belongs to the vitamin-B12 independent methionine synthase family. Zn(2+) is required as a cofactor.

It carries out the reaction 5-methyltetrahydropteroyltri-L-glutamate + L-homocysteine = tetrahydropteroyltri-L-glutamate + L-methionine. It participates in amino-acid biosynthesis; L-methionine biosynthesis via de novo pathway; L-methionine from L-homocysteine (MetE route): step 1/1. Catalyzes the transfer of a methyl group from 5-methyltetrahydrofolate to homocysteine resulting in methionine formation. The chain is 5-methyltetrahydropteroyltriglutamate--homocysteine methyltransferase from Pectobacterium atrosepticum (strain SCRI 1043 / ATCC BAA-672) (Erwinia carotovora subsp. atroseptica).